The primary structure comprises 238 residues: Probable tetraspanin tspC (238 aa).

Residues 1–16 are Cytoplasmic-facing; the sequence is MVNTRDFLPKTTHYLK. The chain crosses the membrane as a helical span at residues 17–37; that stretch reads VPIIGLNAILWLLGLVLIVVG. The Extracellular segment spans residues 38 to 69; that stretch reads SVCISFFSNFKEFTKESGYKNALSNLTTSAPT. N-linked (GlcNAc...) asparagine glycosylation occurs at Asn62. The helical transmembrane segment at 70–90 threads the bilayer; sequence GVLVIGIFFILLTLVGCFVAY. Residues 91–93 lie on the Cytoplasmic side of the membrane; that stretch reads KEK. The chain crosses the membrane as a helical span at residues 94-114; the sequence is LVGLVLYTMLMLILLVVLIGI. Residues 115 to 197 lie on the Extracellular side of the membrane; it reads GGKALTLDKE…GIFTKQVSSK (83 aa). N-linked (GlcNAc...) asparagine glycans are attached at residues Asn143 and Asn164. A helical membrane pass occupies residues 198–218; sequence LVLVGIAGVVIGCIEFVAMAL. At 219–238 the chain is on the cytoplasmic side; it reads SLFLIIRICRSPRSRAYDQY.

The protein belongs to the tetraspanin (TM4SF) family.

The protein localises to the membrane. This is Probable tetraspanin tspC (tspC) from Dictyostelium discoideum (Social amoeba).